The sequence spans 126 residues: Pancreatic polypeptide prohormone (126 aa).

The signal sequence occupies residues 1 to 26 (MTATRCCLWLLLLGTCMALLLPEAWG). Position 62 is a tyrosine amide (Tyr62). Residues 77–126 (RQSHAAAPGGSHRHPPAGLPAAKGGTGVSGSPPKPWDCLPCRAHSLPSQS) are disordered.

The protein belongs to the NPY family. No icosapeptide-like peptide is cleaved from the C-terminal.

It localises to the secreted. Hormone secreted by pancreatic cells that acts as a regulator of pancreatic and gastrointestinal functions probably by signaling through the G protein-coupled receptor NPY4R2. This is Pancreatic polypeptide prohormone (PPY) from Cavia porcellus (Guinea pig).